The chain runs to 3848 residues: Intermembrane lipid transfer protein tipC (3848 aa).

In terms of domain architecture, Chorein N-terminal spans 4–112 (HIAASVLTKY…KFQDEKQAKL (109 aa)). Disordered stretches follow at residues 243-268 (IKKEDSGKQQQQQQQQQGEEQDDEIE), 450-481 (LKLQQQQQQQQQNLNKISPTTTTTPSTSTGGG), 966-985 (QQLQPQQKQQSPPLISSPPL), 1174-1219 (KNNQ…NNNS), 1326-1345 (ERKLNNKTSPTTPSSSGVST), 1907-1926 (ENINNNNNNNLTTSTTTTTT), 2024-2047 (DDYNDDNYNSNGNNNNNNSNNQLP), 2209-2290 (IKPA…NKNL), 2330-2353 (FNPKFSSSSSSSQQQQQQPLSPLL), 2509-2541 (KQLNNQLQQQSNNNNNNNNNNNNTNSNNSNLLG), 3209-3228 (GITNDPNNPNNPNNNPNNND), and 3310-3342 (INQQPNQQSSSPQSTNTTTTTTTNTTTTNNTTQ). Composition is skewed to low complexity over residues 251–260 (QQQQQQQQQG) and 452–477 (LQQQQQQQQQNLNKISPTTTTTPSTS). Over residues 1175–1190 (NNQNNNQNNNQNNNQN) the composition is skewed to low complexity. Residues 1191-1200 (INESSPTVFI) are compositionally biased toward polar residues. The segment covering 1202-1211 (SPPPPPPPPL) has biased composition (pro residues). Positions 1333-1345 (TSPTTPSSSGVST) are enriched in low complexity. Composition is skewed to low complexity over residues 2029-2044 (DNYNSNGNNNNNNSNN), 2217-2289 (NNNN…NNKN), and 2335-2353 (SSSSSSSQQQQQQPLSPLL). Low complexity-rich tracts occupy residues 3212 to 3228 (NDPNNPNNPNNNPNNND) and 3311 to 3342 (NQQPNQQSSSPQSTNTTTTTTTNTTTTNNTTQ).

Belongs to the VPS13 family.

Its subcellular location is the membrane. In terms of biological role, mediates the transfer of lipids between membranes at organelle contact sites. The chain is Intermembrane lipid transfer protein tipC (tipC) from Dictyostelium discoideum (Social amoeba).